A 715-amino-acid chain; its full sequence is Palmitoyltransferase ZDHHC5 (715 aa).

Residues 1 to 13 (MPAESGKRFKPSK) are Cytoplasmic-facing. The chain crosses the membrane as a helical span at residues 14–34 (YVPVSAAAIFLVGATTLFFAF). The Extracellular segment spans residues 35–38 (TCPG). The chain crosses the membrane as a helical span at residues 39-59 (LSLCVSPAVPIYNAIVFLFVL). Topologically, residues 60–148 (ANFSMATFMD…NCIGRRNYRY (89 aa)) are cytoplasmic. Phosphotyrosine is present on Tyr-91. A DHHC domain is found at 104 to 154 (KWCATCRFYRPPRCSHCSVCDNCVEEFDHHCPWVNNCIGRRNYRYFFLFLL). The active-site S-palmitoyl cysteine intermediate is the Cys-134. A helical transmembrane segment spans residues 149–169 (FFLFLLSLTAHIMGVFGFGLL). The Extracellular segment spans residues 170-191 (YVLYHMEELSGVRTAVTMAVMC). A helical transmembrane segment spans residues 192–212 (VAGLFFIPVAGLTGFHVVLVA). The Cytoplasmic segment spans residues 213–715 (RGRTTNEQVT…VGGTTYEISV (503 aa)). Phosphoserine occurs at positions 247, 296, and 299. Residues 289 to 648 (GELRRSKSKG…SQKAPAGVSE (360 aa)) are disordered. Thr-303 is subject to Phosphothreonine. The residue at position 345 (Ser-345) is a Phosphoserine. Residues Thr-348 and Thr-350 each carry the phosphothreonine modification. A compositionally biased stretch (low complexity) spans 359–373 (SSSSTSAAMPHSSSA). A phosphoserine mark is found at Ser-380, Ser-398, Ser-406, and Ser-409. Thr-411 carries the phosphothreonine modification. Phosphoserine is present on residues Ser-415, Ser-425, Ser-429, and Ser-432. Residues 422-432 (SSGSRSSSLKS) are compositionally biased toward low complexity. The residue at position 436 (Thr-436) is a Phosphothreonine. Positions 442–478 (QLQSIRSEGTTSTSYKSLANQTRNGSLSYDSLLTPSD) are enriched in polar residues. Ser-529 and Ser-554 each carry phosphoserine. Residue Arg-617 is modified to Omega-N-methylarginine. Ser-621 carries the post-translational modification Phosphoserine. Phosphothreonine is present on Thr-659. The segment at 666–715 (LKTAYSKSNGQPKSIGSASPGPGQQPLSSPTRGGVKKVSGVGGTTYEISV) is disordered. The segment covering 668-679 (TAYSKSNGQPKS) has biased composition (polar residues). Residues 681–695 (GSASPGPGQQPLSSP) show a composition bias toward low complexity. Phosphoserine occurs at positions 684 and 694. Arg-697 carries the omega-N-methylarginine modification.

The protein belongs to the DHHC palmitoyltransferase family. ERF2/ZDHHC9 subfamily. Post-translationally, phosphorylation regulates association with endocytic proteins and its subcellular localization. Phosphorylation by LYN during fatty acid uptake leads to inactivation of the activity. In terms of processing, autopalmitoylated. Palmitoylation of the C-terminal tail regulates stimulation-dependent plasma membrane motility.

The protein resides in the cell membrane. The enzyme catalyses L-cysteinyl-[protein] + hexadecanoyl-CoA = S-hexadecanoyl-L-cysteinyl-[protein] + CoA. Its function is as follows. Palmitoyltransferase that catalyzes the addition of palmitate onto various protein substrates such as CTNND2, CD36, GSDMD, NLRP3, NOD1, NOD2, STAT3 and S1PR1 thus plays a role in various biological processes including cell adhesion, inflammation, fatty acid uptake, bacterial sensing or cardiac functions. Plays an important role in the regulation of synapse efficacy by mediating palmitoylation of delta-catenin/CTNND2, thereby increasing synaptic delivery and surface stabilization of alpha-amino-3-hydroxy-5-methyl-4-isoxazole propionic acid receptors (AMPARs). Under basal conditions, remains at the synaptic membrane through FYN-mediated phosphorylation that prevents association with endocytic proteins. Neuronal activity enhances the internalization and trafficking of DHHC5 from spines to dendritic shafts where it palmitoylates delta-catenin/CTNND2. Regulates cell adhesion at the plasma membrane by palmitoylating GOLGA7B and DSG2. Plays a role in innate immune response by mediating the palmitoylation of NOD1 and NOD2 and their proper recruitment to the bacterial entry site and phagosomes. Also participates in fatty acid uptake by palmitoylating CD36 and thereby targeting it to the plasma membrane. Upon binding of fatty acids to CD36, gets phosphorylated by LYN leading to inactivation and subsequent CD36 caveolar endocytosis. Controls oligodendrocyte development by catalyzing STAT3 palmitoylation. Acts as a regulator of inflammatory response by mediating palmitoylation of NLRP3 and GSDMD. Palmitoylates NLRP3 to promote inflammasome assembly and activation. Activates pyroptosis by catalyzing palmitoylation of gasdermin-D (GSDMD), thereby promoting membrane translocation and pore formation of GSDMD. The chain is Palmitoyltransferase ZDHHC5 (ZDHHC5) from Canis lupus familiaris (Dog).